The sequence spans 48 residues: ATP synthase protein 8 (48 aa).

Position 1 is an N-formylmethionine (Met1). Over 1-12 (MPQLVPFYFTNQ) the chain is Mitochondrial intermembrane. Residues 13 to 32 (IFYGFASLSVIVYLFSIYIL) form a helical membrane-spanning segment. Residues 33–48 (PHYLEIYVTRIFITKT) are Mitochondrial matrix-facing.

F-type ATP synthases have 2 components, the catalytic core F(1) and the membrane-embedded component F(0), linked together by a central stalk and a peripheral stalk. The central stalk, also called rotor shaft, is often seen as part of F(1). The peripheral stalk is seen as part of F(0). F(0) contains the membrane channel next to the rotor. F-type ATP synthases form dimers but each monomer functions independently in ATP generation. The dimer consists of 17 different polypeptides: ATP1 (subunit alpha, 3 molecules per monomer, part of F(1)), ATP2 (subunit beta, 3 copies per monomer, part of F(1)), ATP3 (subunit gamma, part of the central stalk), ATP4 (subunit b, part of the peripheral stalk), ATP5/OSCP (subunit 5/OSCP, part of the peripheral stalk), ATP6 (subunit a, part of the peripheral stalk), ATP7 (subunit d, part of the peripheral stalk), ATP8 (subunit 8, part of the peripheral stalk), OLI1 (subunit c, part of the rotor, 10 molecules per monomer), ATP14 (subunit h, part of the peripheral stalk), ATP15 (subunit epsilon, part of the central stalk), ATP16 (subunit delta, part of the central stalk), ATP17 (subunit f, part of the peripheral stalk), ATP18 (subunit i/j, part of the peripheral stalk), ATP19 (subunit k, dimer-specific, at interface between monomers), ATP20 (subunit g, at interface between monomers), TIM11 (subunit e, at interface between monomers).

The protein localises to the mitochondrion inner membrane. Mitochondrial membrane ATP synthase (F(1)F(0) ATP synthase or Complex V) produces ATP from ADP in the presence of a proton gradient across the membrane which is generated by electron transport complexes of the respiratory chain. F-type ATP synthases consist of two structural domains, F(1) - containing the extramembraneous catalytic core, and F(0) - containing the membrane proton channel, linked together by a central stalk and a peripheral stalk. During catalysis, ATP synthesis in the catalytic domain of F(1) is coupled via a rotary mechanism of the central stalk subunits to proton translocation. Part of the complex F(0) domain. Minor subunit located with subunit a/ATP6 in the membrane. This Yarrowia lipolytica (strain CLIB 122 / E 150) (Yeast) protein is ATP synthase protein 8.